A 630-amino-acid chain; its full sequence is 1-deoxy-D-xylulose-5-phosphate synthase (630 aa).

Thiamine diphosphate contacts are provided by residues H74 and 115 to 117 (GHA). Mg(2+) is bound at residue D146. Thiamine diphosphate is bound by residues 147–148 (AA), N175, F284, and E364. Position 175 (N175) interacts with Mg(2+).

The protein belongs to the transketolase family. DXPS subfamily. As to quaternary structure, homodimer. Mg(2+) serves as cofactor. The cofactor is thiamine diphosphate.

The catalysed reaction is D-glyceraldehyde 3-phosphate + pyruvate + H(+) = 1-deoxy-D-xylulose 5-phosphate + CO2. The protein operates within metabolic intermediate biosynthesis; 1-deoxy-D-xylulose 5-phosphate biosynthesis; 1-deoxy-D-xylulose 5-phosphate from D-glyceraldehyde 3-phosphate and pyruvate: step 1/1. Functionally, catalyzes the acyloin condensation reaction between C atoms 2 and 3 of pyruvate and glyceraldehyde 3-phosphate to yield 1-deoxy-D-xylulose-5-phosphate (DXP). In Methylacidiphilum infernorum (isolate V4) (Methylokorus infernorum (strain V4)), this protein is 1-deoxy-D-xylulose-5-phosphate synthase.